The following is a 339-amino-acid chain: Inositol 2-dehydrogenase 2 (339 aa).

It belongs to the Gfo/Idh/MocA family. Homotetramer.

It catalyses the reaction myo-inositol + NAD(+) = scyllo-inosose + NADH + H(+). Involved in the oxidation of myo-inositol (MI) to 2-keto-myo-inositol (2KMI or 2-inosose). This Saccharopolyspora erythraea (strain ATCC 11635 / DSM 40517 / JCM 4748 / NBRC 13426 / NCIMB 8594 / NRRL 2338) protein is Inositol 2-dehydrogenase 2.